Reading from the N-terminus, the 281-residue chain is UPF0500 protein C1orf216 homolog (281 aa).

The segment covering 1–12 has biased composition (polar residues); the sequence is MFTIQKPDTVSH. Residues 1–197 are disordered; the sequence is MFTIQKPDTV…SSSDSDSISV (197 aa). Basic and acidic residues predominate over residues 45–74; that stretch reads TYDKNENWSQDKKGGEEGENKSKSEDEHSS. Low complexity-rich tracts occupy residues 92 to 102, 147 to 161, and 169 to 178; these read STGSEGISLSS, SSSLSIDSPDSVSAS, and PAPTTTPQEN. A compositionally biased stretch (acidic residues) spans 179 to 190; the sequence is PETEDSDVESSS. The stretch at 198 to 257 forms a coiled coil; the sequence is TLSEAFQSLQDKEKLKEREKEKHHAQLTMYRRLALLRWIRALQQKVRDQQNRLQESFDTI.

Belongs to the UPF0500 family.

The sequence is that of UPF0500 protein C1orf216 homolog from Xenopus laevis (African clawed frog).